Reading from the N-terminus, the 149-residue chain is Arginine repressor (149 aa).

The protein belongs to the ArgR family.

It is found in the cytoplasm. Its pathway is amino-acid biosynthesis; L-arginine biosynthesis [regulation]. Its function is as follows. Regulates arginine biosynthesis genes. The chain is Arginine repressor from Halalkalibacterium halodurans (strain ATCC BAA-125 / DSM 18197 / FERM 7344 / JCM 9153 / C-125) (Bacillus halodurans).